Reading from the N-terminus, the 207-residue chain is Enolase (207 aa).

Glutamine 162 lines the (2R)-2-phosphoglycerate pocket. Glutamate 204 serves as the catalytic Proton donor.

This sequence belongs to the enolase family.

It localises to the cytoplasm. It is found in the secreted. The protein localises to the cell surface. It catalyses the reaction (2R)-2-phosphoglycerate = phosphoenolpyruvate + H2O. It functions in the pathway carbohydrate degradation; glycolysis; pyruvate from D-glyceraldehyde 3-phosphate: step 4/5. Functionally, catalyzes the reversible conversion of 2-phosphoglycerate (2-PG) into phosphoenolpyruvate (PEP). It is essential for the degradation of carbohydrates via glycolysis. The polypeptide is Enolase (Campylobacter fetus).